The following is a 228-amino-acid chain: Geranylgeranylglyceryl phosphate synthase (228 aa).

Position 14 (Lys14) interacts with sn-glycerol 1-phosphate. Mg(2+)-binding residues include Asp16 and Thr42. Sn-glycerol 1-phosphate-binding positions include 160 to 165 (YIEYSG), Gly190, and 210 to 211 (GN).

Belongs to the GGGP/HepGP synthase family. Group I subfamily. Requires Mg(2+) as cofactor.

Its subcellular location is the cytoplasm. It catalyses the reaction sn-glycerol 1-phosphate + (2E,6E,10E)-geranylgeranyl diphosphate = sn-3-O-(geranylgeranyl)glycerol 1-phosphate + diphosphate. It functions in the pathway membrane lipid metabolism; glycerophospholipid metabolism. Prenyltransferase that catalyzes the transfer of the geranylgeranyl moiety of geranylgeranyl diphosphate (GGPP) to the C3 hydroxyl of sn-glycerol-1-phosphate (G1P). This reaction is the first ether-bond-formation step in the biosynthesis of archaeal membrane lipids. In Methanocella arvoryzae (strain DSM 22066 / NBRC 105507 / MRE50), this protein is Geranylgeranylglyceryl phosphate synthase.